The following is a 1037-amino-acid chain: Receptor kinase-like protein Xa21 (1037 aa).

The N-terminal stretch at 1-24 is a signal peptide; sequence MARSPTSVMISSLLLLLLIGPASS. The Extracellular portion of the chain corresponds to 25-665; the sequence is DDAAAAAAAR…LLENRKHFPV (641 aa). N-linked (GlcNAc...) asparagine glycosylation is found at Asn-66, Asn-101, and Asn-112. LRR repeat units follow at residues 89 to 112, 113 to 137, 138 to 161, 163 to 185, 187 to 210, 211 to 234, 236 to 259, 260 to 283, 285 to 308, 310 to 331, and 333 to 355; these read PHRV…SLGN, LSFL…LSRL, SRLQ…IGAC, KLTS…IGAS, KHLS…LGNL, TSLQ…LGQL, SSLL…IWNL, SSLR…AFKT, HLLE…VANA, HLTQ…GFGR, and RNLT…DWGF. Asn-209 carries an N-linked (GlcNAc...) asparagine glycan. N-linked (GlcNAc...) asparagine glycosylation is found at Asn-247 and Asn-258. Residue Asn-307 is glycosylated (N-linked (GlcNAc...) asparagine). Asn-334, Asn-361, and Asn-385 each carry an N-linked (GlcNAc...) asparagine glycan. LRR repeat units lie at residues 362–385, 387–411, 412–435, 437–459, 460–482, 483–507, 509–532, 533–556, 557–580, 581–604, and 606–629; these read CSKL…SFSN, STSL…IGNL, IGLQ…LGRL, NLGI…IGNL, TELN…TLSN, LTNL…LFNI, TLSI…IGHL, KNLV…LGDC, QLLR…LGQL, KGLE…LADI, and MLHS…AFAD. N-linked (GlcNAc...) asparagine glycosylation is found at Asn-447, Asn-458, Asn-482, Asn-495, and Asn-515. Residues Asn-592 and Asn-611 are each glycosylated (N-linked (GlcNAc...) asparagine). Residues 666 to 686 form a helical membrane-spanning segment; it reads LPISVSLVAALAILSSLYLLI. The Cytoplasmic segment spans residues 687-1037; the sequence is TWHKRTKKGA…PVCEGASLEF (351 aa). Residues 689 to 694 carry the Nuclear localization signal motif; that stretch reads HKRTKK. At Ser-698 the chain carries Phosphoserine. The residue at position 700 (Thr-700) is a Phosphothreonine. Ser-701 carries the phosphoserine modification. At Thr-717 the chain carries Phosphothreonine. The region spanning 720 to 1019 is the Protein kinase domain; it reads FAPTNLLGSG…GDIIDELNAI (300 aa). ATP contacts are provided by residues 726 to 734 and Lys-748; that span reads LGSGSFGSV. Asp-854 serves as the catalytic Proton acceptor.

The protein belongs to the protein kinase superfamily. Ser/Thr protein kinase family. Interacts with WRKY62/XB10 in the nucleus. Interacts with SERK2. Requires Mn(2+) as cofactor. Mg(2+) is required as a cofactor. In terms of processing, undergoes protein cleavage upon X.oryzae pv. oryzae protein Ax21 detection, thus releasing the processed protein kinase Xa21 chain. Autophosphorylated on serine and threonine residues; these phosphorylation prevents proteolytic degradation.

It is found in the cell membrane. It localises to the endoplasmic reticulum membrane. The protein resides in the nucleus. The enzyme catalyses L-seryl-[protein] + ATP = O-phospho-L-seryl-[protein] + ADP + H(+). It carries out the reaction L-threonyl-[protein] + ATP = O-phospho-L-threonyl-[protein] + ADP + H(+). Its function is as follows. Receptor kinase that detects X.oryzae pv. oryzae protein Ax21 to promote innate immunity. Following X.oryzae pv. oryzae protein Ax21 detection, undergoes cleavage, releasing the processed protein kinase Xa21 chain. Functionally, the processed protein kinase Xa21 chain released by protein cleavage after X.oryzae pv. oryzae protein Ax21 detection translocates into the nucleus where it can bind and regulate WRKY62, a transcription factor. Confers resistance to the bacterial pathogen X.oryzae pv. oryzae (Xoo). This Oryza sativa subsp. japonica (Rice) protein is Receptor kinase-like protein Xa21.